Consider the following 315-residue polypeptide: Calcium homeostasis modulator protein 4 (315 aa).

Topologically, residues 1–14 (MSPDLNCISSSLLR) are cytoplasmic. Residues 15–37 (SEPCINSLIAILTVCGQQLFSSY) form a helical membrane-spanning segment. Topologically, residues 38-48 (TFSCPCQVGKN) are extracellular. 2 disulfide bridges follow: Cys41/Cys132 and Cys43/Cys163. The chain crosses the membrane as a helical span at residues 49–71 (FYYGSAFLVVPALILLIAGYALR). Topologically, residues 72-104 (GQMWTVASEYCCCSCTPPYRRSSPLERRLACLM) are cytoplasmic. The chain crosses the membrane as a helical span at residues 105–130 (FFDITGRALVAPLTWLTVTLLTGTYY). Residues 131–184 (ECAASEFASVDQYPMFANVTPSKREEMLAGFPCYTSAPSDVIPIRDEVALLHRY) are Extracellular-facing. The helical transmembrane segment at 185 to 208 (QSQMLGWILVVLATIALLLSKCLA) threads the bilayer. Topologically, residues 209–315 (RCCSPLTSLQ…DRQEGIEMKP (107 aa)) are cytoplasmic.

The protein belongs to the CALHM family. In terms of assembly, oligomerizes to form decameric and undecameric channels. Two hemichannels can assemble in a tail-to-tail manner to form a gap junction.

Its subcellular location is the cell membrane. Functionally, may assemble to form gap junction channel-like structures involved in intercellular communication. Channel gating and ion conductance are likely regulated by membrane lipids rather than by membrane depolarization or extracellular calcium levels. This is Calcium homeostasis modulator protein 4 from Mus musculus (Mouse).